We begin with the raw amino-acid sequence, 77 residues long: Defensin-like protein 91 (77 aa).

The N-terminal stretch at M1–A27 is a signal peptide. Cystine bridges form between C38–C75, C43–C64, C49–C73, and C53–C74.

The protein belongs to the DEFL family.

The protein localises to the secreted. The chain is Defensin-like protein 91 (LCR47) from Arabidopsis thaliana (Mouse-ear cress).